The primary structure comprises 391 residues: Multidrug resistance protein MdtL (391 aa).

Residues 1-3 lie on the Cytoplasmic side of the membrane; sequence MSR. The chain crosses the membrane as a helical span at residues 4-24; that stretch reads FLICSFALVLLYPAGIDMYLV. Over 25–37 the chain is Periplasmic; that stretch reads GLPRIAADLNASE. The chain crosses the membrane as a helical span at residues 38–58; sequence AQLHIAFSVYLAGMAAAMLFA. Residues 59-75 are Cytoplasmic-facing; that stretch reads GKMADRSGRKPVAIPGS. The chain crosses the membrane as a helical span at residues 76 to 96; the sequence is ALFIIASVFCSLAETSTLFLA. Residues 97 to 98 are Periplasmic-facing; sequence GR. The chain crosses the membrane as a helical span at residues 99 to 119; that stretch reads FLQGLGAGCCYVVAFAILRDT. Topologically, residues 120 to 130 are cytoplasmic; sequence LDDRRRAKVLS. A helical membrane pass occupies residues 131–151; it reads LLNGITCIIPVLAPVLGHLIM. Residues 152-157 lie on the Periplasmic side of the membrane; the sequence is LKFPWQ. A helical transmembrane segment spans residues 158 to 178; the sequence is SLFWAMAMMGIAVLMLSLFIL. Residues 179–202 lie on the Cytoplasmic side of the membrane; it reads KETRPASPAASDKPRENSESLLNR. A helical membrane pass occupies residues 203–222; that stretch reads FFLSRVVITTLSVSVILTFV. The Periplasmic segment spans residues 223–244; it reads NTSPVLLMEIMGFERGEYATIM. The helical transmembrane segment at 245–265 threads the bilayer; it reads ALTAGVSMTFSFSTPFALGIF. The Cytoplasmic portion of the chain corresponds to 266–268; the sequence is KPR. A helical transmembrane segment spans residues 269-289; the sequence is TLMITSQVLFLAAGITLAVSP. The Periplasmic segment spans residues 290-292; sequence SHA. A helical membrane pass occupies residues 293–313; it reads VSLFGITLICAGFSVGFGVAM. Over 314–330 the chain is Cytoplasmic; sequence SQALGPFSLRAGVASST. Residues 331–351 traverse the membrane as a helical segment; that stretch reads LGIAQVCGSSLWIWLAAVVGI. At 352 to 355 the chain is on the periplasmic side; that stretch reads GAWN. The helical transmembrane segment at 356-376 threads the bilayer; sequence MLIGILIACSIVSLLLIMFVA. Residues 377–391 lie on the Cytoplasmic side of the membrane; that stretch reads PGRPVAAHEEIHHHA.

Belongs to the major facilitator superfamily. DHA1 family. MdtL (TC 2.A.1.2.22) subfamily.

The protein resides in the cell inner membrane. The sequence is that of Multidrug resistance protein MdtL from Shigella flexneri serotype 5b (strain 8401).